The primary structure comprises 359 residues: Fructose-bisphosphate aldolase class 2 (359 aa).

Ser61 is a D-glyceraldehyde 3-phosphate binding site. Catalysis depends on Asp110, which acts as the Proton donor. Zn(2+) is bound by residues His111, Asp145, Glu175, and His227. Gly228 contacts dihydroxyacetone phosphate. Residue His265 coordinates Zn(2+). Dihydroxyacetone phosphate-binding positions include 266–268 (GGS) and 287–290 (NIDT).

It belongs to the class II fructose-bisphosphate aldolase family. Requires Zn(2+) as cofactor.

The catalysed reaction is beta-D-fructose 1,6-bisphosphate = D-glyceraldehyde 3-phosphate + dihydroxyacetone phosphate. It participates in carbohydrate degradation; glycolysis; D-glyceraldehyde 3-phosphate and glycerone phosphate from D-glucose: step 4/4. Its function is as follows. Catalyzes the aldol condensation of dihydroxyacetone phosphate (DHAP or glycerone-phosphate) with glyceraldehyde 3-phosphate (G3P) to form fructose 1,6-bisphosphate (FBP) in gluconeogenesis and the reverse reaction in glycolysis. In Buchnera aphidicola subsp. Schizaphis graminum (strain Sg), this protein is Fructose-bisphosphate aldolase class 2 (fbaA).